Reading from the N-terminus, the 515-residue chain is Putative ammonium transporter 2 (515 aa).

The next 12 helical transmembrane spans lie at 34-54, 72-92, 124-144, 156-176, 191-211, 226-246, 266-286, 291-311, 321-337, 346-366, 381-401, and 404-424; these read GVWM…FGLL, VFDV…LTFG, GISY…STIV, SHCF…HWVW, AGCS…TLYL, VSDP…WLAF, AVGT…ITRL, IQMD…TGGC, LVGA…YPVT, VGVF…PAIF, FQTS…LLFL, and FVIL…LFLI.

The protein belongs to the ammonia transporter channel (TC 1.A.11.2) family.

It is found in the membrane. Functionally, involved in the uptake of ammonia. Implicated in aging. The protein is Putative ammonium transporter 2 (amt-2) of Caenorhabditis elegans.